The chain runs to 458 residues: Ammonium transporter Rh type B (458 aa).

The Cytoplasmic portion of the chain corresponds to 1–13 (MAGSSRRAGGRRL). Residues 14-34 (QLPLLCLLLQGATAILFAVFV) traverse the membrane as a helical segment. The Extracellular portion of the chain corresponds to 35-61 (RYNHETDAALWHWGNHSNPDNEFYFRY). Asn-49 is a glycosylation site (N-linked (GlcNAc...) asparagine). A helical membrane pass occupies residues 62–82 (PSFQDVHTMIFVGFGFLMAFL). Topologically, residues 83–86 (QRYG) are cytoplasmic. The helical transmembrane segment at 87-107 (FSSVGFTFLLAAFALQWSTLV) threads the bilayer. The Extracellular segment spans residues 108 to 124 (QGFLHTFHGGHIHIGVE). Residues 125–145 (SMINADFCAGAVLISFGAILG) traverse the membrane as a helical segment. Over 146–149 (KTGP) the chain is Cytoplasmic. Residues 150 to 170 (AQLLLMALLEVVLFGLNEFVL) form a helical membrane-spanning segment. The Extracellular segment spans residues 171–178 (LSLLGVKD). The chain crosses the membrane as a helical span at residues 179–201 (AGGSMTIHTFGAYFGLVLSRVLY). Topologically, residues 202–219 (RPQLEKSKHRQSSVYHSD) are cytoplasmic. A helical membrane pass occupies residues 220 to 240 (LFAMIGTIFLWIFWPSFNSAP). The Extracellular segment spans residues 241-251 (TPLGDGQHRTA). A helical transmembrane segment spans residues 252-272 (LNTYYSLTASTLSTFALSALV). Residues 273 to 282 (GRDGRLDMVH) lie on the Cytoplasmic side of the membrane. A helical membrane pass occupies residues 283 to 303 (VQNAALAGGVVVGTSAEMMLT). Pro-304 is a topological domain (extracellular). Residues 305-325 (FGALAAGFLAGTVSTLGFKFF) traverse the membrane as a helical segment. Residues 326–346 (TPILESKFKIQDTCGVHNLHG) are Cytoplasmic-facing. The chain crosses the membrane as a helical span at residues 347–367 (MPGVLGALLGVLVAGLATHDS). At 368–393 (YGEGLESVFPLIAEGQRSSTSQALHQ) the chain is on the extracellular side. The chain crosses the membrane as a helical span at residues 394-414 (LFGLFVTLIFASVGGGLGGLL). The Cytoplasmic portion of the chain corresponds to 415–458 (LRLPFLDSPPDSQCYEDQIYWEVPEEHADLAQGSLRPEEPDTQA). Residues 416-424 (RLPFLDSPP) form an interaction with ANK3 region. Residues 429 to 432 (YEDQ) carry the Basolateral sorting signal motif.

The protein belongs to the ammonium transporter (TC 2.A.49) family. Rh subfamily. Interacts (via C-terminus) with ANK2 and ANK3; required for targeting to the basolateral membrane. In terms of processing, N-glycosylated.

It localises to the cell membrane. The protein localises to the basolateral cell membrane. It catalyses the reaction NH4(+)(in) = NH4(+)(out). It carries out the reaction methylamine(out) = methylamine(in). The enzyme catalyses CO2(out) = CO2(in). Its function is as follows. Ammonium transporter involved in the maintenance of acid-base homeostasis. Transports ammonium and its related derivative methylammonium across the basolateral plasma membrane of epithelial cells likely contributing to renal transepithelial ammonia transport and ammonia metabolism. May transport either NH4(+) or NH3 ammonia species predominantly mediating an electrogenic NH4(+) transport. May act as a CO2 channel providing for renal acid secretion. This Sus scrofa (Pig) protein is Ammonium transporter Rh type B (RHBG).